Here is a 183-residue protein sequence, read N- to C-terminus: dCTP deaminase (183 aa).

106-111 serves as a coordination point for dCTP; sequence KSTYAR. Residue glutamate 132 is the Proton donor/acceptor of the active site. DCTP-binding residues include glutamine 151, tyrosine 165, and glutamine 175.

It belongs to the dCTP deaminase family. As to quaternary structure, homotrimer.

It catalyses the reaction dCTP + H2O + H(+) = dUTP + NH4(+). It functions in the pathway pyrimidine metabolism; dUMP biosynthesis; dUMP from dCTP (dUTP route): step 1/2. Its function is as follows. Catalyzes the deamination of dCTP to dUTP. In Gluconobacter oxydans (strain 621H) (Gluconobacter suboxydans), this protein is dCTP deaminase.